The following is a 503-amino-acid chain: Probable cytochrome P450 303a1 (503 aa).

Cys-448 lines the heme pocket.

It belongs to the cytochrome P450 family. Heme is required as a cofactor.

It is found in the endoplasmic reticulum membrane. The protein localises to the microsome membrane. In terms of biological role, may be involved in the metabolism of insect hormones and in the breakdown of synthetic insecticides. This is Probable cytochrome P450 303a1 (Cyp303a1) from Drosophila melanogaster (Fruit fly).